Reading from the N-terminus, the 381-residue chain is Neuropeptide Y receptor type 2 (381 aa).

A disordered region spans residues 1–37 (MGPVGAEADENQTVEVKVEPYGPGHTTPRGELPPDPE). Residues 1-51 (MGPVGAEADENQTVEVKVEPYGPGHTTPRGELPPDPEPELIDSTKLVEVQV) lie on the Extracellular side of the membrane. Residue N11 is glycosylated (N-linked (GlcNAc...) asparagine). The chain crosses the membrane as a helical span at residues 52–72 (ILILAYCSIILLGVVGNSLVI). Topologically, residues 73–86 (HVVIKFKSMRTVTN) are cytoplasmic. A helical transmembrane segment spans residues 87–107 (FFIANLAVADLLVNTLCLPFT). At 108 to 124 (LTYTLMGEWKMGPVLCH) the chain is on the extracellular side. C123 and C203 are joined by a disulfide. A helical transmembrane segment spans residues 125–145 (LVPYAQGLAVQVSTITLTVIA). The Cytoplasmic portion of the chain corresponds to 146–165 (LDRHRCIVYHLESKISKRIS). A helical transmembrane segment spans residues 166–186 (FLIIGLAWGISALLASPLAIF). Topologically, residues 187 to 216 (REYSLIEIIPDFEIVACTEKWPGEEKSVYG) are extracellular. Residues 217–237 (TVYSLSTLLILYVLPLGIISF) traverse the membrane as a helical segment. Topologically, residues 238 to 268 (SYTRIWSKLRNHVSPGAASDHYHQRRHKMTK) are cytoplasmic. Residues 269–289 (MLVCVVVVFAVSWLPLHAFQL) form a helical membrane-spanning segment. Residues 290–304 (AVDIDSHVLDLKEYK) lie on the Extracellular side of the membrane. A helical membrane pass occupies residues 305 to 325 (LIFTVFHIIAMCSTFANPLLY). Residues 326–381 (GWMNSNYRKAFLSAFRCEQRLDAIHSEVSMTFKAKKNLEVKKNNGPTDSFSEATNV) lie on the Cytoplasmic side of the membrane. C342 carries S-palmitoyl cysteine lipidation.

This sequence belongs to the G-protein coupled receptor 1 family.

Its subcellular location is the cell membrane. Its function is as follows. Receptor for neuropeptide Y and peptide YY. In Mus musculus (Mouse), this protein is Neuropeptide Y receptor type 2 (Npy2r).